Reading from the N-terminus, the 142-residue chain is Baculoviral IAP repeat-containing protein 5 (142 aa).

A BIR repeat occupies 18–88 (RVSTFKNWPF…KHSSGCAFLS (71 aa)). Ser20 carries the post-translational modification Phosphoserine; by AURKC. Lys23 bears the N6-acetyllysine mark. Position 34 is a phosphothreonine; by CDK1 and CDK15 (Thr34). Residue Thr48 is modified to Phosphothreonine; by CK2; in vitro. 4 residues coordinate Zn(2+): Cys57, Cys60, His77, and Cys84. 4 positions are modified to N6-acetyllysine: Lys90, Lys110, Lys112, and Lys115. Thr117 carries the post-translational modification Phosphothreonine; by AURKB.

It belongs to the IAP family. Monomer or homodimer. Exists as a homodimer in the apo state and as a monomer in the CPC-bound state. The monomer protects cells against apoptosis more efficiently than the dimer. Only the dimeric form is capable of enhancing tubulin stability in cells. When phosphorylated, interacts with LAMTOR5/HBXIP; the resulting complex binds pro-CASP9, as well as active CASP9, but much less efficiently. Component of the chromosomal passenger complex (CPC) composed of at least BIRC5/survivin, CDCA8/borealin, INCENP, AURKB or AURKC; in the complex forms a triple-helix bundle-based subcomplex with INCENP and CDCA8. Interacts with JTB. Interacts (via BIR domain) with histone H3 phosphorylated at 'Thr-3' (H3pT3). Interacts with EVI5. Interacts with GTP-bound RAN in both the S and M phases of the cell cycle. Interacts with USP9X. Interacts with tubulin. Interacts with BIRC2/c-IAP1. The monomeric form interacts with XIAP/BIRC4. Both the dimeric and monomeric form can interact with DIABLO/SMAC. Interacts with BIRC6/bruce. Interacts with FBXL7; this interaction facilitates the polyubiquitination and subsequent proteasomal degradation of BIRC5 by the SCF(FBXL7) E3 ubiquitin-protein ligase complex. In terms of processing, ubiquitinated by the Cul9-RING ubiquitin-protein ligase complex, leading to its degradation. Ubiquitination is required for centrosomal targeting. Deubiquitinated by USP35 or USP38; leading to stabilization. Post-translationally, in vitro phosphorylation at Thr-117 by AURKB prevents interaction with INCENP and localization to mitotic chromosomes. Phosphorylation at Thr-48 by CK2 is critical for its mitotic and anti-apoptotic activities. Phosphorylation at Thr-34 by CDK15 is critical for its anti-apoptotic activity. Phosphorylation at Ser-20 by AURKC is critical for regulation of proper chromosome alignment and segregation, and possibly cytokinesis. In terms of tissue distribution, expressed in spleen, lung, brain, heart, kidney and intestine (at protein level). Expressed in cochlea including the organ of Corti, the lateral wall, the interdental cells of the Limbus as well as in cells of the cochlear nerve and the spiral ganglions (at protein level). Also expressed in Schwann cells (at protein level). Not expressed in cells of the inner and outer sulcus or the Reissner's membrane (at protein level).

Its subcellular location is the cytoplasm. The protein resides in the nucleus. It is found in the chromosome. It localises to the centromere. The protein localises to the cytoskeleton. Its subcellular location is the spindle. The protein resides in the kinetochore. It is found in the midbody. Multitasking protein that has dual roles in promoting cell proliferation and preventing apoptosis. Component of a chromosome passage protein complex (CPC) which is essential for chromosome alignment and segregation during mitosis and cytokinesis. Acts as an important regulator of the localization of this complex; directs CPC movement to different locations from the inner centromere during prometaphase to midbody during cytokinesis and participates in the organization of the center spindle by associating with polymerized microtubules. Involved in the recruitment of CPC to centromeres during early mitosis via association with histone H3 phosphorylated at 'Thr-3' (H3pT3) during mitosis. The complex with RAN plays a role in mitotic spindle formation by serving as a physical scaffold to help deliver the RAN effector molecule TPX2 to microtubules. May counteract a default induction of apoptosis in G2/M phase. The acetylated form represses STAT3 transactivation of target gene promoters. May play a role in neoplasia. Inhibitor of CASP3 and CASP7. Essential for the maintenance of mitochondrial integrity and function. The polypeptide is Baculoviral IAP repeat-containing protein 5 (Cavia porcellus (Guinea pig)).